The following is a 98-amino-acid chain: uncharacterized protein (98 aa).

It belongs to the Rv1128c/1148c/1588c/1702c/1945/3466 family.

This is an uncharacterized protein from Mycobacterium tuberculosis (strain ATCC 25618 / H37Rv).